The primary structure comprises 1153 residues: uncharacterized protein (1153 aa).

An N-terminal signal peptide occupies residues M1 to G18. A lipid anchor (N-palmitoyl cysteine) is attached at C19. The S-diacylglycerol cysteine moiety is linked to residue C19. The next 4 helical transmembrane spans lie at V289–I309, L393–F413, A422–F442, and I457–I477.

It belongs to the TrbL/VirB6 family.

The protein resides in the cell membrane. This is an uncharacterized protein from Rickettsia conorii (strain ATCC VR-613 / Malish 7).